A 56-amino-acid polypeptide reads, in one-letter code: Large ribosomal subunit protein bL32 (56 aa).

The interval 1 to 37 (MAVQQNKKSRSKRGMRRSHDALSTAQLSVDATSGELH) is disordered. Residues 7-16 (KKSRSKRGMR) are compositionally biased toward basic residues. The segment covering 21 to 31 (ALSTAQLSVDA) has biased composition (polar residues).

This sequence belongs to the bacterial ribosomal protein bL32 family.

In Shewanella loihica (strain ATCC BAA-1088 / PV-4), this protein is Large ribosomal subunit protein bL32.